The following is an 847-amino-acid chain: Acyl-homoserine lactone acylase QuiP (847 aa).

The signal sequence occupies residues 1 to 26; that stretch reads MASPAFMRFLPRCGAAAAFGTLLGLA. The active-site Nucleophile is the Ser-265.

It belongs to the peptidase S45 family. Heterodimer of an alpha subunit and a beta subunit processed from the same precursor.

It is found in the periplasm. It carries out the reaction an N-acyl-L-homoserine lactone + H2O = L-homoserine lactone + a carboxylate. Functionally, catalyzes the deacylation of acyl-homoserine lactone (AHL or acyl-HSL), releasing homoserine lactone (HSL) and the corresponding fatty acid. Possesses a specificity for the degradation of long-chain acyl-HSLs (side chains of seven or more carbons in length). Appears to be the acyl-HSL acylase that underlies the ability of P.aeruginosa to degrade and utilize certain acyl-HSLs as growth nutrients, including one of its own quorum signals, 3-oxo-C12-HSL. Is thought to have a role in quorum quenching. The polypeptide is Acyl-homoserine lactone acylase QuiP (quiP) (Pseudomonas aeruginosa (strain ATCC 15692 / DSM 22644 / CIP 104116 / JCM 14847 / LMG 12228 / 1C / PRS 101 / PAO1)).